Reading from the N-terminus, the 669-residue chain is UvrABC system protein C (669 aa).

The 80-residue stretch at 16–95 folds into the GIY-YIG domain; sequence TNPGVYRFRD…IKEFKPRFNV (80 aa). The 36-residue stretch at 207–242 folds into the UVR domain; the sequence is KRFIGRLEKDMAAAVAELDYERAARVRDDIIALRKV.

It belongs to the UvrC family. Interacts with UvrB in an incision complex.

It is found in the cytoplasm. The UvrABC repair system catalyzes the recognition and processing of DNA lesions. UvrC both incises the 5' and 3' sides of the lesion. The N-terminal half is responsible for the 3' incision and the C-terminal half is responsible for the 5' incision. The protein is UvrABC system protein C of Arthrobacter sp. (strain FB24).